A 273-amino-acid chain; its full sequence is Phycobilisome 32.1 kDa linker polypeptide, phycocyanin-associated, rod 2 (273 aa).

Residues 1–180 (MTSLVSAQRL…VYRGYATSDR (180 aa)) form the PBS-linker domain. A CpcD-like domain is found at 220–273 (NQMYRLQVIQGAAPGRGTRVRRGKAEYLVSYDNLSAKLQQINRQGDTVTMISLA).

It belongs to the phycobilisome linker protein family. In terms of assembly, part of 2 PBS rod complexes, the conventional CpcG-PBS rod and a photosystem I-specific CpcL-PBS rod, both of which include ferredoxin--NADP reductase (petH). CpcG-PBS has on average 3 stacked phycocyanin hexamers (PC, CpcA and CpcB). Linker CpcG connects the PC stack to the thylakoid, the hexamers are linked by 1 copy of CpcC1, 1 copy of CpcC2 and the stack is terminated by a single copy of CpcD. The CpcL-PBS has on average 5 stacked phycocyanin hexamers (PC, CpcA and CpcB). Linker CpcL connects the PC stack to the thylakoid, the hexamers are linked by 1 copy of CpcC1, 3 copies of CpcC2 and the stack is terminated by a single copy of CpcD. Interacts with the C-phycocyanin (PC) beta subunit (cpcB), it may fit into the center of the PC hexamer.

Its subcellular location is the cellular thylakoid membrane. Functionally, rod linker protein, associated with phycocyanin. Linker polypeptides determine the state of aggregation and the location of the disk-shaped phycobiliprotein units within the phycobilisome and modulate their spectroscopic properties in order to mediate a directed and optimal energy transfer. The sequence is that of Phycobilisome 32.1 kDa linker polypeptide, phycocyanin-associated, rod 2 (cpcC2) from Synechocystis sp. (strain ATCC 27184 / PCC 6803 / Kazusa).